The primary structure comprises 33 residues: Protamine TP16 (33 aa).

The interval 1 to 33 is disordered; sequence MPRRRRSSSRPVRRRRRARVSRRRRRRGRRRRR.

Testis.

It is found in the nucleus. Its subcellular location is the chromosome. Functionally, protamines substitute for histones in the chromatin of sperm during the haploid phase of spermatogenesis. They compact sperm DNA into a highly condensed, stable and inactive complex. The polypeptide is Protamine TP16 (Oncorhynchus mykiss (Rainbow trout)).